Here is a 525-residue protein sequence, read N- to C-terminus: D-aminopeptidase (525 aa).

The active-site Nucleophile is the S62. K65 serves as the catalytic Proton donor/acceptor. Positions 485–495 (PRALDHTAPGD) are important for specificity. D489 lines the substrate pocket.

It belongs to the peptidase S12 family. Homodimer.

It carries out the reaction Release of an N-terminal D-amino acid from a peptide, Xaa-|-Yaa-, in which Xaa is preferably D-Ala, D-Ser or D-Thr. D-amino acid amides and methyl esters also are hydrolyzed, as is glycine amide.. Its activity is regulated as follows. Inhibited by beta-lactam compounds such as 6-aminopenicillic acid, 7-aminocephalosporanic acid, benzylpenicillin and ampicillin. Inhibited by p-chloromercuribenzoate. Functionally, hydrolyzes N-terminal residues in D-amino acid-containing peptides. The sequence is that of D-aminopeptidase from Gluconobacter oxydans (strain 621H) (Gluconobacter suboxydans).